Reading from the N-terminus, the 406-residue chain is Arginine biosynthesis bifunctional protein ArgJ (406 aa).

Residues threonine 152, lysine 179, threonine 190, glutamate 277, asparagine 401, and serine 406 each coordinate substrate. Threonine 190 functions as the Nucleophile in the catalytic mechanism.

Belongs to the ArgJ family. In terms of assembly, heterotetramer of two alpha and two beta chains.

Its subcellular location is the cytoplasm. It catalyses the reaction N(2)-acetyl-L-ornithine + L-glutamate = N-acetyl-L-glutamate + L-ornithine. It carries out the reaction L-glutamate + acetyl-CoA = N-acetyl-L-glutamate + CoA + H(+). Its pathway is amino-acid biosynthesis; L-arginine biosynthesis; L-ornithine and N-acetyl-L-glutamate from L-glutamate and N(2)-acetyl-L-ornithine (cyclic): step 1/1. It participates in amino-acid biosynthesis; L-arginine biosynthesis; N(2)-acetyl-L-ornithine from L-glutamate: step 1/4. In terms of biological role, catalyzes two activities which are involved in the cyclic version of arginine biosynthesis: the synthesis of N-acetylglutamate from glutamate and acetyl-CoA as the acetyl donor, and of ornithine by transacetylation between N(2)-acetylornithine and glutamate. This chain is Arginine biosynthesis bifunctional protein ArgJ, found in Neisseria gonorrhoeae.